Reading from the N-terminus, the 470-residue chain is MASIPHYDYLVIGGGSGGVASARRAASYGAKTLLIEGKALGGTCVNVGCVPKKVMWNASDLAGRIRQAKEYGFPDVDPKYADNFDWSGFKAKRDAYVKRLNGIYERNLQKEGVEYVFGWATLYKQEGQEFPLVHVKSDDGNTKLYSAKKIMIATGGKPRLPDVPGAEYGIDSDGFFALETQPKRVAVVGGGYIGVELAGVFHGLNSETTLFCRGQTVLRAFDIMIQDTITDYYVKEGINVLKGSGVKKIVKKDNGELLVTYEQDGAEKDITLDSLIWTIGREPLKDTLNLGEFGIKTNKRGYIEVDEYQRSSVDNIYSLGDVCGKVELTPMAIAAGRKLSNRLFGPTEFKNQKQDYTDVPSAVFSHPEVGSIGITEAAAKEQYGEENVKVYTSKFVAMYYAMLEEKAPTAYKLVCAGKDEKVVGLHIVGADSAEILQGFGVAIRMGATKADFDNVVAIHPTSAEELVTMR.

Residues serine 16 and glycine 17 each contribute to the FAD site. Serine 16 contacts glutathione. Arginine 23 lines the glutathione pocket. Residues glutamate 36, threonine 43, cysteine 44, and lysine 52 each contribute to the FAD site. A disulfide bridge links cysteine 44 with cysteine 49. Position 104 (tyrosine 104) interacts with glutathione. Alanine 120 is an FAD binding site. 5 residues coordinate NADP(+): glycine 190, isoleucine 193, glutamate 196, arginine 213, and arginine 219. Threonine 228 provides a ligand contact to glutathione. Glycine 280 is an NADP(+) binding site. Aspartate 321 provides a ligand contact to FAD. Position 327 (glutamate 327) interacts with NADP(+). Position 329 (threonine 329) interacts with FAD. Residue arginine 337 participates in glutathione binding. Alanine 362 is a binding site for NADP(+). Lysine 412 provides a ligand contact to glutathione. Histidine 459 contributes to the FAD binding site. Histidine 459 acts as the Proton acceptor in catalysis.

This sequence belongs to the class-I pyridine nucleotide-disulfide oxidoreductase family. In terms of assembly, homodimer. FAD is required as a cofactor.

The protein resides in the cytoplasm. It is found in the mitochondrion. The enzyme catalyses 2 glutathione + NADP(+) = glutathione disulfide + NADPH + H(+). Its function is as follows. Catalyzes the reduction of glutathione disulfide (GSSG) to reduced glutathione (GSH). Constitutes the major mechanism to maintain a high GSH:GSSG ratio in the cytosol. The protein is Glutathione reductase (GLR1) of Yarrowia lipolytica (strain CLIB 122 / E 150) (Yeast).